The chain runs to 162 residues: Ribonuclease P protein component (162 aa).

The tract at residues 1–63 (MDEKDLATQP…PPAAGGKLLS (63 aa)) is disordered. A compositionally biased stretch (basic and acidic residues) spans 21-38 (GPHEDPRRQEGVEAEKAE).

Belongs to the RnpA family. Consists of a catalytic RNA component (M1 or rnpB) and a protein subunit.

It carries out the reaction Endonucleolytic cleavage of RNA, removing 5'-extranucleotides from tRNA precursor.. In terms of biological role, RNaseP catalyzes the removal of the 5'-leader sequence from pre-tRNA to produce the mature 5'-terminus. It can also cleave other RNA substrates such as 4.5S RNA. The protein component plays an auxiliary but essential role in vivo by binding to the 5'-leader sequence and broadening the substrate specificity of the ribozyme. The protein is Ribonuclease P protein component of Thermus scotoductus.